Consider the following 167-residue polypeptide: Large ribosomal subunit protein uL10 (167 aa).

Belongs to the universal ribosomal protein uL10 family. Part of the ribosomal stalk of the 50S ribosomal subunit. The N-terminus interacts with L11 and the large rRNA to form the base of the stalk. The C-terminus forms an elongated spine to which L12 dimers bind in a sequential fashion forming a multimeric L10(L12)X complex.

In terms of biological role, forms part of the ribosomal stalk, playing a central role in the interaction of the ribosome with GTP-bound translation factors. In Yersinia enterocolitica serotype O:8 / biotype 1B (strain NCTC 13174 / 8081), this protein is Large ribosomal subunit protein uL10.